Reading from the N-terminus, the 84-residue chain is U8-theraphotoxin-Hhn1c 3 (84 aa).

The signal sequence occupies residues 1–21; the sequence is MKVALIVCLVWVMAMMELVSC. 5 disulfides stabilise this stretch: Cys23–Cys35, Cys29–Cys44, Cys34–Cys67, Cys54–Cys75, and Cys69–Cys81.

The protein belongs to the AVIT (prokineticin) family. Expressed by the venom gland.

It localises to the secreted. The sequence is that of U8-theraphotoxin-Hhn1c 3 from Cyriopagopus hainanus (Chinese bird spider).